The chain runs to 345 residues: UPF0228 protein MA_2656 (345 aa).

The protein belongs to the UPF0228 family.

This Methanosarcina acetivorans (strain ATCC 35395 / DSM 2834 / JCM 12185 / C2A) protein is UPF0228 protein MA_2656.